We begin with the raw amino-acid sequence, 526 residues long: Clostripain (526 aa).

Residues 1-27 (MLRRKVSTLLMTALITTSFLNSKPVYA) form the signal peptide. The propeptide occupies 28–50 (NPVTKSKDNNLKEVQQVTSKSNK). A propeptide spans 182–190 (EKSNPRLNR) (linker). C231 serves as the catalytic Nucleophile.

Belongs to the peptidase C11 family. As to quaternary structure, heterodimer of a light chain and a heavy chain held together by strong non-covalent forces rather than by intramolecular disulfide bridges.

It carries out the reaction Preferential cleavage: Arg-|-Xaa, including Arg-|-Pro bond, but not Lys-|-Xaa.. Cysteine endopeptidase with strict specificity. This Hathewaya histolytica (Clostridium histolyticum) protein is Clostripain (cloSI).